Reading from the N-terminus, the 795-residue chain is METALAKTPQKRQVMFLAILLLLWEAGSEAVRYSIPEETESGYSVANLAKDLGLGVGELATRGARMHYKGNKELLQLDIKTGNLLLYEKLDREVMCGATEPCILHFQLLLENPVQFFQTDLQLTDINDHAPEFPEKEMLLKIPESTQPGTVFPLKIAQDFDIGSNTVQNYTISPNSHFHVATHNRGDGRKYPELVLDKALDREERPELSLTLTALDGGAPPRSGTTTIRIVVLDNNDNAPEFLQSFYEVQVPENSPLNSLVVVVSARDLDAGAYGSVAYALFQGDEVTQPFVIDEKTAEIRLKRALDFEATPYYNVEIVATDGGGLSGKCTVAIEVVDVNDNAPELTMSTLSSPTPENAPETVVAVFSVSDPDSGDNGRMICSIQNDLPFLLKPTLKNFYTLVTQRTLDRESQAEYNITITVTDMGTPRLKTEHNITVLVSDVNDNAPAFTQTSYTLFVRENNSPALHIGSVSATDRDSGTNAQVTYSLLPPQNPHLRLASLVSINADNGHLFALRSLDYEALQAFEFRVGATDRGSPALSSEALVRVLVLDANDNSPFVLYPLQNGSAPCTELVPRAAEPGYLVTKVVAVDGDSGQNAWLSYQLLKATEPGLFSMWAHNGEVRTARLLSERDAAKHRLVVLVKDNGEPPRSATATLHVLLVDGFSQPYLPLPEAAPAQAQADSLTVYLVVALASVSSLFLFSVLLFVAVRLCRRSRAAPVGRCSVPEGPFPGHLVDVSGTGTLSQSYHYEVCLTGDSGAGEFKFLKPIIPNLLPQGAGEEIGKTAAFRNSFGLN.

The signal sequence occupies residues 1–30; the sequence is METALAKTPQKRQVMFLAILLLLWEAGSEA. Residues 31–689 lie on the Extracellular side of the membrane; it reads VRYSIPEETE…AQADSLTVYL (659 aa). 5 consecutive Cadherin domains span residues 35 to 133, 138 to 242, 247 to 346, 351 to 450, and 455 to 560; these read IPEE…APEF, MLLK…APEF, YEVQ…APEL, LSSP…APAF, and YTLF…SPFV. N-linked (GlcNAc...) asparagine glycosylation is present at Asn169. An N6-acetyllysine modification is found at Lys296. N-linked (GlcNAc...) asparagine glycosylation is found at Asn417 and Asn435. N-linked (GlcNAc...) asparagine glycosylation is present at Asn566. Positions 567–670 constitute a Cadherin 6 domain; sequence GSAPCTELVP…LVDGFSQPYL (104 aa). The chain crosses the membrane as a helical span at residues 690–710; it reads VVALASVSSLFLFSVLLFVAV. Residues 711-795 lie on the Cytoplasmic side of the membrane; that stretch reads RLCRRSRAAP…AAFRNSFGLN (85 aa).

The protein resides in the cell membrane. Its function is as follows. Potential calcium-dependent cell-adhesion protein. May be involved in the establishment and maintenance of specific neuronal connections in the brain. The protein is Protocadherin beta-5 (PCDHB5) of Homo sapiens (Human).